A 117-amino-acid polypeptide reads, in one-letter code: Putative cysteine proteinase inhibitor 7 (117 aa).

The N-terminal stretch at M1–A24 is a signal peptide. Positions G28 to A84 constitute a Cystatin domain. The short motif at Q71–G75 is the Secondary area of contact element.

It belongs to the cystatin family. Phytocystatin subfamily.

The protein localises to the secreted. In terms of biological role, specific inhibitor of cysteine proteinases. Probably involved in the regulation of endogenous processes and in defense against pests and pathogens. The polypeptide is Putative cysteine proteinase inhibitor 7 (Oryza sativa subsp. japonica (Rice)).